The primary structure comprises 509 residues: ATP synthase subunit alpha 1 (509 aa).

172-179 (GDRQTGKT) serves as a coordination point for ATP.

This sequence belongs to the ATPase alpha/beta chains family. In terms of assembly, F-type ATPases have 2 components, CF(1) - the catalytic core - and CF(0) - the membrane proton channel. CF(1) has five subunits: alpha(3), beta(3), gamma(1), delta(1), epsilon(1). CF(0) has four main subunits: a(1), b(1), b'(1) and c(9-12).

The protein resides in the cell inner membrane. It catalyses the reaction ATP + H2O + 4 H(+)(in) = ADP + phosphate + 5 H(+)(out). Its function is as follows. Produces ATP from ADP in the presence of a proton gradient across the membrane. The alpha chain is a regulatory subunit. The sequence is that of ATP synthase subunit alpha 1 from Dinoroseobacter shibae (strain DSM 16493 / NCIMB 14021 / DFL 12).